Reading from the N-terminus, the 139-residue chain is Trafficking protein particle complex subunit 2-like protein (139 aa).

Belongs to the TRAPP small subunits family. Sedlin subfamily.

It localises to the cytoplasm. The protein resides in the perinuclear region. Its subcellular location is the endoplasmic reticulum. It is found in the golgi apparatus. May play a role in vesicular transport from endoplasmic reticulum to Golgi. The protein is Trafficking protein particle complex subunit 2-like protein (trappc2l) of Xenopus tropicalis (Western clawed frog).